A 431-amino-acid chain; its full sequence is MENKSNSQILFAEAQQYIPGGVNSPVRAFKSVGQEFPRFIKFAKGAYLYDVDWNKYIDYIGSWGPMILGHCDDDVLEVIQCQVKNGLSYGAPCKQEVDLAKKIIELMPNIEQVRFVNSGTEATMSAIRLARAYTCRNKIIKFEGCYHGHADEFLVAAGSGALSLGQPNSPGVPEDVVKDTLVASFNDMESIQALFEKYKDEIACIIVEPIAGNMNMIFPQDDFLAKLRAICDQNSSLLIFDEVMTGFRVALGGAQSIYNVKPDLTTLGKVIGGGMPVGAFGGRKEIMQKVSPAGPVYQAGTLSGNPIAMTAGIKTLEKISQLGFFDELGAKAQKLVDGLNEAAKAYDFKFHAKCLGGMFGLFFCSDKIAVNTFVDLGKTNLKMFNQFFAYMLDNGVYLAPSAYEAGFISIAHSDEDIEKTICLAKKFFQEN.

Lysine 269 is subject to N6-(pyridoxal phosphate)lysine.

The protein belongs to the class-III pyridoxal-phosphate-dependent aminotransferase family. HemL subfamily. In terms of assembly, homodimer. The cofactor is pyridoxal 5'-phosphate.

It is found in the cytoplasm. The catalysed reaction is (S)-4-amino-5-oxopentanoate = 5-aminolevulinate. The protein operates within porphyrin-containing compound metabolism; protoporphyrin-IX biosynthesis; 5-aminolevulinate from L-glutamyl-tRNA(Glu): step 2/2. The protein is Glutamate-1-semialdehyde 2,1-aminomutase of Francisella tularensis subsp. mediasiatica (strain FSC147).